The following is a 97-amino-acid chain: Co-chaperonin GroES (97 aa).

The protein belongs to the GroES chaperonin family. Heptamer of 7 subunits arranged in a ring. Interacts with the chaperonin GroEL.

The protein localises to the cytoplasm. Together with the chaperonin GroEL, plays an essential role in assisting protein folding. The GroEL-GroES system forms a nano-cage that allows encapsulation of the non-native substrate proteins and provides a physical environment optimized to promote and accelerate protein folding. GroES binds to the apical surface of the GroEL ring, thereby capping the opening of the GroEL channel. The polypeptide is Co-chaperonin GroES (Pseudomonas putida (strain GB-1)).